Here is a 351-residue protein sequence, read N- to C-terminus: MSDKNQIAARASLIEQLMSKRNFEDLGNHLTELETIYVTKEHLQETDVVRAVYRVLKNCPSVALKKKAKCLLSKWKAVYKQTHSKARNSPKLFPVRGNKEENSGPSHDPSQNETLGICSSNSLSSQDVAKLSEMIVPENRAIQLKPKEEHFGDGDPESTGKRSSELLDPTTPMRTKCIELLYAALTSSSTDQPKADLWQNFAREIEEHVFTLYSKNIKKYKTCIRSKVANLKNPRNSHLQQNLLSGTTSPREFAEMTVMEMANKELKQLRASYTESCIQEHYLPQVIDGTQTNKIKCRRCEKYNCKVTVIDRGTLFLPSWVRNSNPDEQMMTYVICNECGEQWYHSKWVCW.

One can recognise a TFIIS N-terminal domain in the interval 5–82 (NQIAARASLI…SKWKAVYKQT (78 aa)). Disordered regions lie at residues 86–119 (ARNS…GICS) and 144–169 (LKPK…LLDP). The segment covering 103–119 (SGPSHDPSQNETLGICS) has biased composition (polar residues). Positions 145 to 165 (KPKEEHFGDGDPESTGKRSSE) are enriched in basic and acidic residues. The region spanning 173–289 (MRTKCIELLY…EHYLPQVIDG (117 aa)) is the TFIIS central domain.

This chain is Transcription elongation factor A N-terminal and central domain-containing protein (TCEANC), found in Homo sapiens (Human).